A 175-amino-acid polypeptide reads, in one-letter code: UPF0178 protein GOX1710 (175 aa).

It belongs to the UPF0178 family.

The chain is UPF0178 protein GOX1710 from Gluconobacter oxydans (strain 621H) (Gluconobacter suboxydans).